The sequence spans 209 residues: MSKSYTLKAEKRERVGKGSSRELRRNGLIPAVIYGEKQPPLAITVPYKEIFYKIHAGGFRTTIATIVLDKQKIMVLPKDYQLDPVRDFPLHVDFLRISAKSVVEVNIPVHFLNEDTAPGLKKGGVLNIVRHEIECTAPANAIPEAIEIDLSSYSIGDSIHISAVQLPKDVTPIIQDRDFTIATIAAPASLDVSDETSEQEKDEGETQTS.

Disordered stretches follow at residues 1 to 20 (MSKSYTLKAEKRERVGKGSS) and 190 to 209 (LDVSDETSEQEKDEGETQTS). Positions 8 to 20 (KAEKRERVGKGSS) are enriched in basic and acidic residues. Acidic residues predominate over residues 192 to 209 (VSDETSEQEKDEGETQTS).

Belongs to the bacterial ribosomal protein bL25 family. CTC subfamily. In terms of assembly, part of the 50S ribosomal subunit; part of the 5S rRNA/L5/L18/L25 subcomplex. Contacts the 5S rRNA. Binds to the 5S rRNA independently of L5 and L18.

This is one of the proteins that binds to the 5S RNA in the ribosome where it forms part of the central protuberance. The polypeptide is Large ribosomal subunit protein bL25 (Bartonella tribocorum (strain CIP 105476 / IBS 506)).